The primary structure comprises 425 residues: bZIP transcription factor RISBZ2 (425 aa).

2 disordered regions span residues 1 to 50 and 169 to 257; these read MERV…GGGG and NSIG…AAHL. Residues 30 to 50 are compositionally biased toward gly residues; sequence QGGGGVASGGGGGVAGGGGGG. Polar residues predominate over residues 171–182; that stretch reads IGGNATPVQNML. A compositionally biased stretch (acidic residues) spans 213-222; that stretch reads SDDDDMEGEA. A compositionally biased stretch (basic and acidic residues) spans 231–247; sequence ADQRLQRRKQSNRESAR. A bZIP domain is found at 232–295; the sequence is DQRLQRRKQS…NDAAVDNRVL (64 aa). Positions 234–253 are basic motif; sequence RLQRRKQSNRESARRSRSRK. Residues 260–274 form a leucine-zipper region; sequence LEAQVSQLRVENSSL. The disordered stretch occupies residues 334-354; it reads MPFNSSPSEATSDAAVPIQDD.

Heterodimer with RISBZ1/BZIP58.

It localises to the nucleus. Transcriptional activator that binds to the DNA specific sequence 5'-GCCACGT[AC]AG-3' found in the alpha-globulin gene promoter. Does not bind to promoters of other major storage genes such as glutelin, prolamin and albumin. Binds to the DNA specific sequence 5'-TGAGTCA-3' found in seed storage protein gene promoters. The protein is bZIP transcription factor RISBZ2 of Oryza sativa subsp. japonica (Rice).